A 429-amino-acid polypeptide reads, in one-letter code: Glutamate-1-semialdehyde 2,1-aminomutase 2 (429 aa).

Lys-268 is modified (N6-(pyridoxal phosphate)lysine).

The protein belongs to the class-III pyridoxal-phosphate-dependent aminotransferase family. HemL subfamily. As to quaternary structure, homodimer. It depends on pyridoxal 5'-phosphate as a cofactor.

The protein resides in the cytoplasm. It catalyses the reaction (S)-4-amino-5-oxopentanoate = 5-aminolevulinate. It participates in porphyrin-containing compound metabolism; protoporphyrin-IX biosynthesis; 5-aminolevulinate from L-glutamyl-tRNA(Glu): step 2/2. This is Glutamate-1-semialdehyde 2,1-aminomutase 2 from Geobacillus kaustophilus (strain HTA426).